The following is a 3096-amino-acid chain: Cilia- and flagella-associated protein 54 (3096 aa).

Low complexity predominate over residues 1–45 (MAAQGSPSSSPSDDSTTSGSLPELPPTSTATSRSPPESKGSSRSS). Disordered regions lie at residues 1 to 46 (MAAQ…RSSL) and 1248 to 1267 (SNEQEEMPEEDSSKKSLKTK).

The protein belongs to the CFAP54 family.

It localises to the cytoplasm. The protein localises to the cytoskeleton. It is found in the cilium axoneme. Functionally, required for assembly and function of cilia and flagella. The chain is Cilia- and flagella-associated protein 54 from Homo sapiens (Human).